Consider the following 225-residue polypeptide: NAD(P)H-quinone oxidoreductase subunit K, chloroplastic (225 aa).

The [4Fe-4S] cluster site is built by C43, C44, C108, and C139.

This sequence belongs to the complex I 20 kDa subunit family. NDH is composed of at least 16 different subunits, 5 of which are encoded in the nucleus. Requires [4Fe-4S] cluster as cofactor.

The protein resides in the plastid. The protein localises to the chloroplast thylakoid membrane. The catalysed reaction is a plastoquinone + NADH + (n+1) H(+)(in) = a plastoquinol + NAD(+) + n H(+)(out). It carries out the reaction a plastoquinone + NADPH + (n+1) H(+)(in) = a plastoquinol + NADP(+) + n H(+)(out). NDH shuttles electrons from NAD(P)H:plastoquinone, via FMN and iron-sulfur (Fe-S) centers, to quinones in the photosynthetic chain and possibly in a chloroplast respiratory chain. The immediate electron acceptor for the enzyme in this species is believed to be plastoquinone. Couples the redox reaction to proton translocation, and thus conserves the redox energy in a proton gradient. This Populus alba (White poplar) protein is NAD(P)H-quinone oxidoreductase subunit K, chloroplastic.